We begin with the raw amino-acid sequence, 250 residues long: MALVSYSSSEEDEGETSEPPGRRLPPLPPPTTVLRMFQDMEGDEDLDENTKHEGRIRSFKHERGNWATYVYIPFQPQEEFLDLLDELVSVAAENGVLLTKMSEFHISQSQTVVLRHHWINPFVESLKDKLHCMYRFLCIAERIKVYTNQEKTRTFLGLEVSVGMEHLLEVVSEVDRSLQEFNLQTFYQEPSFHVSLAWCVGDKYEKLKGSCLLELQKVIDRFEDSDTLTRFNAEEIRCKAGNKTFCIPLL.

Residues 1 to 31 (MALVSYSSSEEDEGETSEPPGRRLPPLPPPT) form a disordered region. Positions 22–31 (RRLPPLPPPT) are enriched in pro residues. His105 acts as the Proton acceptor in catalysis. 105 to 107 (HIS) is an AMP binding site. UMP contacts are provided by residues Gln149, Tyr187, and 191–195 (SFHVS). AMP is bound by residues Tyr187 and 189–195 (EPSFHVS). His193 (proton donor) is an active-site residue.

This sequence belongs to the 2H phosphoesterase superfamily. USB1 family.

It localises to the nucleus. It catalyses the reaction a 3'-end uridylyl-uridine-RNA = a 3'-end 2',3'-cyclophospho-uridine-RNA + uridine. The enzyme catalyses a 3'-end uridylyl-adenosine-RNA = a 3'-end 2',3'-cyclophospho-uridine-RNA + adenosine. In terms of biological role, 3'-5' RNA exonuclease that trims the 3' end of oligo(U) and oligo(A) tracts of the pre-U6 small nuclear RNA (snRNA) molecule, leading to the formation of a mature U6 snRNA 3' end-terminated with a 2',3'-cyclic phosphate. Participates in the U6 snRNA 3' end processing that prevents U6 snRNA degradation. In addition also removes uridines from the 3' end of U6atac snRNA and possibly the vault RNA VTRNA1-1. The sequence is that of U6 snRNA phosphodiesterase 1 from Xenopus laevis (African clawed frog).